The primary structure comprises 140 residues: Lysozyme B (140 aa).

An N-terminal signal peptide occupies residues 1–18 (MKAFIVLVALALAAPALG). Positions 19–140 (RTMDRCSLAR…GWLPSIDDCF (122 aa)) constitute a C-type lysozyme domain. 4 disulfide bridges follow: Cys-24–Cys-139, Cys-45–Cys-129, Cys-80–Cys-96, and Cys-92–Cys-110. Residues Glu-50 and Asp-68 contribute to the active site.

It belongs to the glycosyl hydrolase 22 family. Found in the midgut.

The catalysed reaction is Hydrolysis of (1-&gt;4)-beta-linkages between N-acetylmuramic acid and N-acetyl-D-glucosamine residues in a peptidoglycan and between N-acetyl-D-glucosamine residues in chitodextrins.. Unlikely to play an active role in the humoral immune defense. May have a function in the digestion of bacteria in the food. This Drosophila melanogaster (Fruit fly) protein is Lysozyme B (LysB).